The primary structure comprises 427 residues: Enolase (427 aa).

(2R)-2-phosphoglycerate is bound at residue Gln163. The active-site Proton donor is the Glu205. 3 residues coordinate Mg(2+): Asp242, Glu285, and Asp312. Positions 337, 366, 367, and 388 each coordinate (2R)-2-phosphoglycerate. Catalysis depends on Lys337, which acts as the Proton acceptor.

It belongs to the enolase family. Mg(2+) serves as cofactor.

Its subcellular location is the cytoplasm. The protein localises to the secreted. The protein resides in the cell surface. It catalyses the reaction (2R)-2-phosphoglycerate = phosphoenolpyruvate + H2O. The protein operates within carbohydrate degradation; glycolysis; pyruvate from D-glyceraldehyde 3-phosphate: step 4/5. Its function is as follows. Catalyzes the reversible conversion of 2-phosphoglycerate (2-PG) into phosphoenolpyruvate (PEP). It is essential for the degradation of carbohydrates via glycolysis. The chain is Enolase from Rhodopseudomonas palustris (strain BisA53).